Consider the following 1433-residue polypeptide: MLARKDTRVKSDFSEIIISLASPESILERSRGEVTQPETINYRTYKPEMKGLFCERIFGPVKDWECHCGKYKRIRYKGIICDRCGVEVTEKKVRRERTGHIELVIPVAHTWYFRSLPSKIGNLLGFPTKKLDQIIYYERYVVVQPGIKAEEGLSYMDFLTEEEYLDILDSLPRENQLLDDSDPKKFIAKMGAEALEFMLSRIDLDTLSSELREQAHTDTSQQRRIEALKRLKIVEAFRDAKTRIANRPEWMVMRIIPVIPPELRPLVPLDGGKFATSDLNDLYRRVIIRNNRLKRLIDIKAPEVILRNEKRMLQEAVDSLFDNSRKVNTVVAEGSRVLKSFSDILKGKQGRFRQNLLGKRVDYSGRSVIVVGPELKLHECGLPKDMAAELFKPFIIRRLIERGIVKTVKSAKKLVEKKTPVVWDILENVLKGHPILLNRAPTLHRLSIQAFQPKLIEGKAIQLHPLVCAAFNADFDGDQMAVHVPLSHEAIAEASLIMLASHNILNSANGTPLAVPTKDMILGLYYLTKGRKSTPEHPVKGEGMTFFSAQEVIIGIDTGQVSIHALVKVKIKDKDEQGETIEHIVDTIAGRVVFNQYVPEELGFINELLTSKKLQHITSQVYRLVGTSRATQFLDDVKSLGFRNAYKAGVSFALDDIKVPTIKFELIEQAQREVNAVQENYLMGLITDNERYNQIIDIWTRVNTQVTVFLMQELEEDRQGFNSIFMMMNSGARGSREQVRQLGGMRGLMGKPQKQLQGSVGEIIENPILSNFKEGLDVLEYFISTHGARKGLADTALKTADAGYLTRRLVDVAQDVITTEEDCGTLRGVTITTSINKDEVAESISERTLGRISLNDIYDPVTNNLLVNAGEEITEEIAAYIESVGIESIEVRSVLTCETRRGICTKCYGRNLSTGKLVQIGEAVGVIAAQSIGEPGTQLTLRTFHVGGAASSIGVESNIQATDKGVLQFEDFNTIKTTNPQGEQLDVIISRSCEVRLLNPQDNRILMHKHVPYGAYLRVKQGELIEKGQEICYWDPYNAVILTSIDGEIEFHSIEEGITYKEEYDEQTGYKEKVIIESKDKTKNPSITVKGSSGEAINYNIPVKARLIVEDGTKIKAGHPLVKIPRVVSLSKDITGGLPRVTELFEARDPSNPSIVSEIDGFVTYGPIKRGSREIFVESKDGIRRKYLVPLSKHILVQDNDYIKAGYPISDGNTSPSSILHIKGPIAVQEYIAKELQAVYRLQGVKINDKHIEVIIRQMLSKLEVIESGDTTFLPGQTVSKFTFREGNDQLLDKKVVIDAGSSSVLRVGQIITARALHEENSNLKRDKLSLVQARDAQPAIARLKLQGITQASLDTKSFISAASFQDTTRVLSEAAIRGKRDRLQGLKENVIVGHLIPTGTGLPRYSKMIIGLREDYENLVASREKQAATDNI.

Residues Cys66, Cys68, Cys81, and Cys84 each coordinate Zn(2+). Residues Asp474, Asp476, and Asp478 each contribute to the Mg(2+) site. Zn(2+)-binding residues include Cys823, Cys897, Cys904, and Cys907.

Belongs to the RNA polymerase beta' chain family. As to quaternary structure, the RNAP catalytic core consists of 2 alpha, 1 beta, 1 beta' and 1 omega subunit. When a sigma factor is associated with the core the holoenzyme is formed, which can initiate transcription. Mg(2+) serves as cofactor. Zn(2+) is required as a cofactor.

It catalyses the reaction RNA(n) + a ribonucleoside 5'-triphosphate = RNA(n+1) + diphosphate. DNA-dependent RNA polymerase catalyzes the transcription of DNA into RNA using the four ribonucleoside triphosphates as substrates. The protein is DNA-directed RNA polymerase subunit beta' of Amoebophilus asiaticus (strain 5a2).